Here is a 213-residue protein sequence, read N- to C-terminus: Orotate phosphoribosyltransferase (213 aa).

Lys26 provides a ligand contact to 5-phospho-alpha-D-ribose 1-diphosphate. Position 34–35 (34–35) interacts with orotate; the sequence is FF. Residues 72–73, Arg99, Lys100, Lys103, His105, and 124–132 contribute to the 5-phospho-alpha-D-ribose 1-diphosphate site; these read YK and DDVITAGTA. Orotate-binding residues include Thr128 and Arg156.

Belongs to the purine/pyrimidine phosphoribosyltransferase family. PyrE subfamily. As to quaternary structure, homodimer. Requires Mg(2+) as cofactor.

The catalysed reaction is orotidine 5'-phosphate + diphosphate = orotate + 5-phospho-alpha-D-ribose 1-diphosphate. Its pathway is pyrimidine metabolism; UMP biosynthesis via de novo pathway; UMP from orotate: step 1/2. Catalyzes the transfer of a ribosyl phosphate group from 5-phosphoribose 1-diphosphate to orotate, leading to the formation of orotidine monophosphate (OMP). The polypeptide is Orotate phosphoribosyltransferase (Klebsiella pneumoniae (strain 342)).